The sequence spans 426 residues: Pannexin-1 (426 aa).

The Cytoplasmic portion of the chain corresponds to 1 to 40 (MAIAHLATEYVFSDFLLKEPTEPKFKGLRLELAVDKMVTC). An S-nitrosocysteine modification is found at cysteine 40. A helical membrane pass occupies residues 41 to 61 (IAVGLPLLLISLAFAQEISIG). The Extracellular segment spans residues 62 to 106 (TQISCFSPSSFSWRQAAFVDSYCWAAVQQKSSLQSESGNLPLWLH). Disulfide bonds link cysteine 66–cysteine 264 and cysteine 84–cysteine 245. The helical transmembrane segment at 107 to 127 (KFFPYILLLFAILLYLPALFW) threads the bilayer. Residues 128-216 (RFSAAPHLCS…HLIMKYISCR (89 aa)) are Cytoplasmic-facing. Tyrosine 198 carries the phosphotyrosine modification. Residues 217–237 (LVTFVVILLACIYLSYYFSLS) form a helical membrane-spanning segment. Residues 238–277 (SLSDEFLCSIKSGVLKNDSTIPDRFQCKLIAVGIFQLLSL) are Extracellular-facing. Asparagine 254 carries N-linked (GlcNAc...) asparagine glycosylation. Residues 278 to 298 (INLIVYALLIPVVVYTFFIPF) traverse the membrane as a helical segment. At 299–426 (RQKTDILKVY…SRQRLLNPSC (128 aa)) the chain is on the cytoplasmic side. S-nitrosocysteine is present on cysteine 346.

The protein belongs to the pannexin family. In terms of assembly, homoheptameric. In terms of processing, S-nitrosylation inhibits channel currents and ATP release. N-glycosylation may play a role in cell surface targeting. Exists in three glycosylation states: non-glycosylated (GLY0), high-mannose glycosylated (GLY1), and fully mature glycosylated (GLY2). Post-translationally, phosphorylated at Tyr-198 by SRC. Phosphorylation activates ATP release. Constitutively phosphorylated in vascular smooth muscle cells. In terms of processing, cleaved by CASP3 and CASP7 during apoptosis. Cleavage opens the channel for the release of metabolites and induces plasma membrane permeability during apoptosis. Widely expressed, including in cartilage, skin, spleen and brain.

It localises to the cell membrane. It is found in the endoplasmic reticulum membrane. It catalyses the reaction chloride(in) = chloride(out). It carries out the reaction iodide(out) = iodide(in). The catalysed reaction is Ca(2+)(in) = Ca(2+)(out). The enzyme catalyses ATP(in) = ATP(out). It catalyses the reaction K(+)(in) = K(+)(out). It carries out the reaction Na(+)(in) = Na(+)(out). The catalysed reaction is nitrate(in) = nitrate(out). The enzyme catalyses L-aspartate(out) = L-aspartate(in). It catalyses the reaction L-glutamate(out) = L-glutamate(in). It carries out the reaction D-gluconate(in) = D-gluconate(out). The catalysed reaction is spermidine(in) = spermidine(out). Functionally, ion channel involved in a variety of physiological functions such as blood pressure regulation, apoptotic cell clearance and oogenesis. Forms anion-selective channels with relatively low conductance and an order of permeabilities: nitrate&gt;iodide&gt;chlroride&gt;&gt;aspartate=glutamate=gluconate. Can release ATP upon activation through phosphorylation or cleavage at C-terminus. May play a role as a Ca(2+)-leak channel to regulate ER Ca(2+) homeostasis. In terms of biological role, during apoptosis and after cleavage by caspases of the C-terminal tail, acts as a plasma membrane channel which mediates the regulated release of find-me signals, such as nucleotides ATP and UTP, and selective plasme membrane permeability. The sequence is that of Pannexin-1 from Mus musculus (Mouse).